Here is a 121-residue protein sequence, read N- to C-terminus: Alpha-endosulfine (121 aa).

Positions 1 to 53 (MSQKQEEENPAEETGEEKQDTQEKEGILPEKAEEAKLKAKYPSLGQKPGGSDF) are disordered. At serine 2 the chain carries N-acetylserine. A Phosphoserine modification is found at serine 2. Positions 16–37 (EEKQDTQEKEGILPEKAEEAKL) are enriched in basic and acidic residues. Residue threonine 21 is modified to Phosphothreonine. Serine 43 carries the phosphoserine modification. Residue serine 67 is modified to Phosphoserine; by GWL. A disordered region spans residues 79–121 (NKQLPSAGPDKNLVTGDHIPTPQDLPQRKSSLVTSKLAGGQVE). Serine 109 is subject to Phosphoserine; by PKA.

It belongs to the endosulfine family. As to quaternary structure, interacts (when phosphorylated at Ser-67) with PPP2R2D. Interacts with ABCC8. Interacts with SNCA; interaction is disrupted when phosphorylated at Ser-109. Phosphorylation at Ser-67 by GWL during mitosis is essential for interaction with PPP2R2D (PR55-delta) and subsequent inactivation of PP2A. Phosphorylated by PKA.

Its subcellular location is the cytoplasm. In terms of biological role, protein phosphatase inhibitor that specifically inhibits protein phosphatase 2A (PP2A) during mitosis. When phosphorylated at Ser-67 during mitosis, specifically interacts with PPP2R2D (PR55-delta) and inhibits its activity, leading to inactivation of PP2A, an essential condition to keep cyclin-B1-CDK1 activity high during M phase. Also acts as a stimulator of insulin secretion by interacting with sulfonylurea receptor (ABCC8), thereby preventing sulfonylurea from binding to its receptor and reducing K(ATP) channel currents. In Bos taurus (Bovine), this protein is Alpha-endosulfine (ENSA).